Here is a 575-residue protein sequence, read N- to C-terminus: Methionine--tRNA ligase, mitochondrial (575 aa).

The 'HIGH' region signature appears at 20–32; the sequence is PIFYPNAKPHLGH. Residues 341–345 carry the 'KMSKS' region motif; that stretch reads KMSKS. Position 344 (Lys-344) interacts with ATP.

Belongs to the class-I aminoacyl-tRNA synthetase family.

The protein localises to the mitochondrion matrix. The catalysed reaction is tRNA(Met) + L-methionine + ATP = L-methionyl-tRNA(Met) + AMP + diphosphate. Catalyzes the attachment of methionine to tRNA(Met) in the mitochondrion. This chain is Methionine--tRNA ligase, mitochondrial (MSM1), found in Saccharomyces cerevisiae (strain ATCC 204508 / S288c) (Baker's yeast).